The chain runs to 380 residues: Type 4 apparatus protein DotM (380 aa).

The next 2 membrane-spanning stretches (helical) occupy residues 18–38 and 99–119; these read MAPVWIVILLFITAYFVWALA and YPVICILVVLAFVLYNSNVTL.

In terms of assembly, the T4BSS is a complex nanomachine composed of several subcomplexes. This subunit is part of the Type IV Coupling Complex (T4CC), a subcomplex composed of the DotLMNYZ core and the IcmSW-LvgA adapter subunits, linked by the C-terminal tail of DotL. Six DotLMNYZ hetero-pentameric units may assemble into a hexameric nanomachine, forming an inner membrane channel for effectors to pass through. Interacts directly with DotL.

The protein localises to the cell inner membrane. In terms of biological role, component of the Dot/Icm type IVB secretion system (T4BSS), which is used to inject bacterial effector proteins into eukaryotic host cells. Part of a subcomplex which recruits effector proteins and delivers them to the core transmembrane subcomplex. Forms the interacting surface for recruitment of acidic Glu-rich motif-containing effectors. The chain is Type 4 apparatus protein DotM from Legionella pneumophila subsp. pneumophila (strain Philadelphia 1 / ATCC 33152 / DSM 7513).